Here is a 366-residue protein sequence, read N- to C-terminus: Glucose 1-dehydrogenase 2 (366 aa).

C39 is a Zn(2+) binding site. S41 is a binding site for substrate. Zn(2+) is bound by residues H66 and E67. Residues N90, E116, Q152, and D156 each coordinate substrate. Residue Q152 coordinates Zn(2+). Residues 212–214, 277–279, 305–307, and K354 each bind NADP(+); these read NRR, FGF, and LIN. Substrate is bound at residue N307.

This sequence belongs to the zinc-containing alcohol dehydrogenase family. Glucose 1-dehydrogenase subfamily. It depends on Zn(2+) as a cofactor.

It carries out the reaction D-glucose + NAD(+) = D-glucono-1,5-lactone + NADH + H(+). It catalyses the reaction D-glucose + NADP(+) = D-glucono-1,5-lactone + NADPH + H(+). Its function is as follows. Catalyzes the NAD(P)(+)-dependent oxidation of D-glucose to D-gluconate via gluconolactone. Can utilize both NAD(+) and NADP(+) as electron acceptor. Is involved in the degradation of glucose through a non-phosphorylative variant of the Entner-Doudoroff pathway. This chain is Glucose 1-dehydrogenase 2, found in Caldivirga maquilingensis (strain ATCC 700844 / DSM 13496 / JCM 10307 / IC-167).